We begin with the raw amino-acid sequence, 968 residues long: RNA polymerase-associated protein RapA (968 aa).

A Helicase ATP-binding domain is found at 164-334 (DVGRRHAPRV…FARLRLLDPN (171 aa)). 177–184 (DEVGLGKT) contacts ATP. The DEAH box signature appears at 280–283 (DEAH). One can recognise a Helicase C-terminal domain in the interval 490-662 (RVEWLMGYLT…YLASPDQTEG (173 aa)).

The protein belongs to the SNF2/RAD54 helicase family. RapA subfamily. As to quaternary structure, interacts with the RNAP. Has a higher affinity for the core RNAP than for the holoenzyme. Its ATPase activity is stimulated by binding to RNAP.

In terms of biological role, transcription regulator that activates transcription by stimulating RNA polymerase (RNAP) recycling in case of stress conditions such as supercoiled DNA or high salt concentrations. Probably acts by releasing the RNAP, when it is trapped or immobilized on tightly supercoiled DNA. Does not activate transcription on linear DNA. Probably not involved in DNA repair. The chain is RNA polymerase-associated protein RapA from Shigella dysenteriae serotype 1 (strain Sd197).